Reading from the N-terminus, the 62-residue chain is Ferredoxin-2 (62 aa).

4Fe-4S ferredoxin-type domains are found at residues Ala2–Asp28 and Ser29–Val62. [4Fe-4S] cluster-binding residues include Cys9, Cys12, Cys15, Cys19, Cys38, Cys41, Cys50, and Cys54.

It depends on [4Fe-4S] cluster as a cofactor.

Ferredoxins are iron-sulfur proteins that transfer electrons in a wide variety of metabolic reactions. The chain is Ferredoxin-2 from Chlorobaculum tepidum (strain ATCC 49652 / DSM 12025 / NBRC 103806 / TLS) (Chlorobium tepidum).